The following is a 276-amino-acid chain: Glutamate 5-kinase (276 aa).

Position 14 (Lys-14) interacts with ATP. Substrate-binding residues include Ser-54, Asp-141, and Asn-157. ATP-binding positions include 177–178 (SD) and 219–225 (TGGMLTK).

It belongs to the glutamate 5-kinase family.

The protein resides in the cytoplasm. It carries out the reaction L-glutamate + ATP = L-glutamyl 5-phosphate + ADP. It functions in the pathway amino-acid biosynthesis; L-proline biosynthesis; L-glutamate 5-semialdehyde from L-glutamate: step 1/2. In terms of biological role, catalyzes the transfer of a phosphate group to glutamate to form L-glutamate 5-phosphate. This Listeria welshimeri serovar 6b (strain ATCC 35897 / DSM 20650 / CCUG 15529 / CIP 8149 / NCTC 11857 / SLCC 5334 / V8) protein is Glutamate 5-kinase.